The chain runs to 448 residues: Homogentisate 1,2-dioxygenase (448 aa).

His303 (proton acceptor) is an active-site residue. The Fe cation site is built by His346 and Glu352. Positions 361 and 382 each coordinate homogentisate. His382 is a Fe cation binding site.

It belongs to the homogentisate dioxygenase family. As to quaternary structure, hexamer; dimer of trimers. Requires Fe cation as cofactor.

It carries out the reaction homogentisate + O2 = 4-maleylacetoacetate + H(+). It participates in amino-acid degradation; L-phenylalanine degradation; acetoacetate and fumarate from L-phenylalanine: step 4/6. Involved in the catabolism of homogentisate (2,5-dihydroxyphenylacetate or 2,5-OH-PhAc), a central intermediate in the degradation of phenylalanine and tyrosine. Catalyzes the oxidative ring cleavage of the aromatic ring of homogentisate to yield maleylacetoacetate. The sequence is that of Homogentisate 1,2-dioxygenase from Bradyrhizobium diazoefficiens (strain JCM 10833 / BCRC 13528 / IAM 13628 / NBRC 14792 / USDA 110).